The sequence spans 458 residues: UDP-N-acetylmuramoylalanine--D-glutamate ligase (458 aa).

124-130 lines the ATP pocket; it reads GSDGKTT.

It belongs to the MurCDEF family.

The protein localises to the cytoplasm. The catalysed reaction is UDP-N-acetyl-alpha-D-muramoyl-L-alanine + D-glutamate + ATP = UDP-N-acetyl-alpha-D-muramoyl-L-alanyl-D-glutamate + ADP + phosphate + H(+). It participates in cell wall biogenesis; peptidoglycan biosynthesis. Its function is as follows. Cell wall formation. Catalyzes the addition of glutamate to the nucleotide precursor UDP-N-acetylmuramoyl-L-alanine (UMA). The protein is UDP-N-acetylmuramoylalanine--D-glutamate ligase of Clostridium botulinum (strain Langeland / NCTC 10281 / Type F).